The chain runs to 156 residues: Small ribosomal subunit protein uS7 (156 aa).

This sequence belongs to the universal ribosomal protein uS7 family. As to quaternary structure, part of the 30S ribosomal subunit. Contacts proteins S9 and S11.

One of the primary rRNA binding proteins, it binds directly to 16S rRNA where it nucleates assembly of the head domain of the 30S subunit. Is located at the subunit interface close to the decoding center, probably blocks exit of the E-site tRNA. This is Small ribosomal subunit protein uS7 from Photobacterium profundum (strain SS9).